Consider the following 190-residue polypeptide: Elongation factor P-like protein (190 aa).

It belongs to the elongation factor P family.

The polypeptide is Elongation factor P-like protein (Citrobacter koseri (strain ATCC BAA-895 / CDC 4225-83 / SGSC4696)).